The primary structure comprises 410 residues: F-box protein At3g61340 (410 aa).

The F-box domain occupies 17 to 66; sequence EEKSERIPFDLVIEILLRLPVKSIARFRYVSKLWQSTLRGQHFTESYLTI.

This is F-box protein At3g61340 from Arabidopsis thaliana (Mouse-ear cress).